A 444-amino-acid polypeptide reads, in one-letter code: UDP-N-acetylmuramate--L-alanine ligase (444 aa).

An ATP-binding site is contributed by 111–117 (GAHGKTS).

It belongs to the MurCDEF family.

It localises to the cytoplasm. It catalyses the reaction UDP-N-acetyl-alpha-D-muramate + L-alanine + ATP = UDP-N-acetyl-alpha-D-muramoyl-L-alanine + ADP + phosphate + H(+). Its pathway is cell wall biogenesis; peptidoglycan biosynthesis. Functionally, cell wall formation. This Leuconostoc mesenteroides subsp. mesenteroides (strain ATCC 8293 / DSM 20343 / BCRC 11652 / CCM 1803 / JCM 6124 / NCDO 523 / NBRC 100496 / NCIMB 8023 / NCTC 12954 / NRRL B-1118 / 37Y) protein is UDP-N-acetylmuramate--L-alanine ligase.